The primary structure comprises 187 residues: GTP cyclohydrolase 1 (187 aa).

Zn(2+)-binding residues include cysteine 79, histidine 82, and cysteine 150.

Belongs to the GTP cyclohydrolase I family. In terms of assembly, toroid-shaped homodecamer, composed of two pentamers of five dimers.

It catalyses the reaction GTP + H2O = 7,8-dihydroneopterin 3'-triphosphate + formate + H(+). It functions in the pathway cofactor biosynthesis; 7,8-dihydroneopterin triphosphate biosynthesis; 7,8-dihydroneopterin triphosphate from GTP: step 1/1. This Fusobacterium nucleatum subsp. nucleatum (strain ATCC 25586 / DSM 15643 / BCRC 10681 / CIP 101130 / JCM 8532 / KCTC 2640 / LMG 13131 / VPI 4355) protein is GTP cyclohydrolase 1.